We begin with the raw amino-acid sequence, 494 residues long: Membrane-bound lytic murein transglycosylase F 1 (494 aa).

The first 24 residues, 1-24, serve as a signal peptide directing secretion; sequence MRIMAVRLVAGAITLALMAYAWLA. The tract at residues 25 to 270 is non-LT domain; it reads WERARDPEPI…TLLEEHFGHL (246 aa). Positions 271-494 are LT domain; it reads GRFDYVGFRA…APLPADPPAD (224 aa). Residue Glu317 is part of the active site. Residues 464–494 form a disordered region; it reads QVPAGEALGEPPLPTPPAPPGAPLPADPPAD. Residues 474–494 show a composition bias toward pro residues; the sequence is PPLPTPPAPPGAPLPADPPAD.

The protein in the N-terminal section; belongs to the bacterial solute-binding protein 3 family. It in the C-terminal section; belongs to the transglycosylase Slt family.

The protein localises to the cell outer membrane. It catalyses the reaction Exolytic cleavage of the (1-&gt;4)-beta-glycosidic linkage between N-acetylmuramic acid (MurNAc) and N-acetylglucosamine (GlcNAc) residues in peptidoglycan, from either the reducing or the non-reducing ends of the peptidoglycan chains, with concomitant formation of a 1,6-anhydrobond in the MurNAc residue.. Functionally, murein-degrading enzyme that degrades murein glycan strands and insoluble, high-molecular weight murein sacculi, with the concomitant formation of a 1,6-anhydromuramoyl product. Lytic transglycosylases (LTs) play an integral role in the metabolism of the peptidoglycan (PG) sacculus. Their lytic action creates space within the PG sacculus to allow for its expansion as well as for the insertion of various structures such as secretion systems and flagella. This chain is Membrane-bound lytic murein transglycosylase F 1, found in Alkalilimnicola ehrlichii (strain ATCC BAA-1101 / DSM 17681 / MLHE-1).